Here is a 203-residue protein sequence, read N- to C-terminus: Small ribosomal subunit protein uS4c (203 aa).

The S4 RNA-binding domain occupies Met-89–Leu-152.

Belongs to the universal ribosomal protein uS4 family. Part of the 30S ribosomal subunit. Contacts protein S5. The interaction surface between S4 and S5 is involved in control of translational fidelity.

The protein localises to the plastid. Functionally, one of the primary rRNA binding proteins, it binds directly to 16S rRNA where it nucleates assembly of the body of the 30S subunit. With S5 and S12 plays an important role in translational accuracy. In Orobanche minor (Small broomrape), this protein is Small ribosomal subunit protein uS4c (rps4).